The following is a 343-amino-acid chain: Twinfilin (343 aa).

2 ADF-H domains span residues 4 to 139 and 177 to 312; these read QTGI…KHKV and GINC…EELH. Residues 314 to 343 are disordered; the sequence is RKLNLRPQFSKPKGPPSRGAKRLTKPQAVE.

Belongs to the actin-binding proteins ADF family. Twinfilin subfamily. Interacts with G-actin; ADP-actin form.

The protein resides in the cytoplasm. It is found in the cytoskeleton. It localises to the cell cortex. In terms of biological role, actin-binding protein involved in motile and morphological processes. Inhibits actin polymerization, likely by sequestering G-actin. In Anopheles gambiae (African malaria mosquito), this protein is Twinfilin (twf).